A 780-amino-acid polypeptide reads, in one-letter code: Dynamin-related protein 3B (780 aa).

An N-acetylserine modification is found at Ser2. One can recognise a Dynamin-type G domain in the interval 40 to 315; that stretch reads TIALPQVAVV…LVQHIKALLP (276 aa). The tract at residues 50-57 is G1 motif; sequence GSQSSGKS. GTP is bound at residue 50–57; it reads GSQSSGKS. The G2 motif stretch occupies residues 76 to 78; sequence CTR. Residues 157–160 form a G3 motif region; sequence DLPG. GTP is bound by residues 157-161 and 226-229; these read DLPGI and TKLD. Residues 226–229 form a G4 motif region; it reads TKLD. The segment at 256–259 is G5 motif; it reads VNRS. 2 disordered regions span residues 536 to 558 and 573 to 592; these read PVARPRDTVEPERTASSGSQIKT and QAVPTAADAERPAPAGSTSW. Basic and acidic residues predominate over residues 539–548; it reads RPRDTVEPER. A compositionally biased stretch (polar residues) spans 549–558; the sequence is TASSGSQIKT. In terms of domain architecture, GED spans 654 to 745; it reads IEITKLLLKS…TLDELPLEAE (92 aa). Residues 753–770 show a composition bias toward basic and acidic residues; sequence IGSEAKHEELPGTRRSRT. A disordered region spans residues 753–780; the sequence is IGSEAKHEELPGTRRSRTETNGNGRLHM. The segment covering 771 to 780 has biased composition (polar residues); it reads ETNGNGRLHM.

Belongs to the TRAFAC class dynamin-like GTPase superfamily. Dynamin/Fzo/YdjA family. Interacts with ARC5 on peroxisomes and ELM1 on mitochondria.

It localises to the mitochondrion. The protein localises to the peroxisome. In terms of biological role, involved in the control of mitochondrial and peroxisomal division and morphology. The chain is Dynamin-related protein 3B (DRP3B) from Arabidopsis thaliana (Mouse-ear cress).